Reading from the N-terminus, the 211-residue chain is BAG family molecular chaperone regulator 2 (211 aa).

Alanine 2 carries the N-acetylalanine modification. A phosphoserine mark is found at serine 20, serine 31, and serine 73. Residues 20–61 (SMADRSSRLLESLDQLELRVEALREAATAVEQEKEVLLEMIH) are a coiled coil. A BAG domain is found at 109–189 (SLKHATRIID…NIENADKAIK (81 aa)).

In terms of assembly, binds to the ATPase domain of HSP/HSC70 chaperones. May interact with NWD1. Interacts with HSPA1A (via NBD), HSPA1B (via NBD) and HSPA8. May interact with DNJC9; the interaction seems to be histone-dependent.

Co-chaperone for HSP70 and HSC70 chaperone proteins. Acts as a nucleotide-exchange factor (NEF) promoting the release of ADP from the HSP70 and HSC70 proteins thereby triggering client/substrate protein release. This is BAG family molecular chaperone regulator 2 from Bos taurus (Bovine).